The chain runs to 147 residues: Hemoglobin subunit beta (147 aa).

Valine 2 carries the post-translational modification N-acetylvaline. The 145-residue stretch at 3–147 (HLTAEEKAAV…VATALAHKYH (145 aa)) folds into the Globin domain. Threonine 13 bears the Phosphothreonine mark. The residue at position 45 (serine 45) is a Phosphoserine. The residue at position 60 (lysine 60) is an N6-acetyllysine. Histidine 64 is a binding site for heme b. An N6-acetyllysine modification is found at lysine 83. Histidine 93 lines the heme b pocket. S-nitrosocysteine is present on cysteine 94. Lysine 145 is modified (N6-acetyllysine).

Belongs to the globin family. In terms of assembly, heterotetramer of two alpha chains and two beta chains. Red blood cells.

Its function is as follows. Involved in oxygen transport from the lung to the various peripheral tissues. In Carlito syrichta (Philippine tarsier), this protein is Hemoglobin subunit beta (HBB).